Reading from the N-terminus, the 382-residue chain is uncharacterized protein (382 aa).

A run of 11 helical transmembrane segments spans residues 8–28, 45–65, 75–95, 102–122, 131–151, 157–177, 204–224, 231–251, 274–294, 325–345, and 349–369; these read VMLLLCGLLLLTLAIAVLNTL, MVSSSYFTGNLVGTLFTGYLI, YLASLIFAAGCVGLGGMVGFW, FIAGIGCAMIWVVVESALMCS, LLAAYMMAYYMGTFLGQLLVS, LLHVLPWVTGMILAGILPLLF, LGVNGCIISGIVLGSLYGLMP, GMANASIGFWMAVLVSAGILG, VVILGSIAMLTQAAMAPALFI, ALLLSYTVGSLLGPSFAAMLM, and SDNLLFIMIASVSFIYLLMLL.

It belongs to the major facilitator superfamily. YcaD (TC 2.A.1.26) family.

The protein resides in the cell inner membrane. This is an uncharacterized protein from Salmonella gallinarum (strain 287/91 / NCTC 13346).